Reading from the N-terminus, the 339-residue chain is D-erythrose-4-phosphate dehydrogenase (339 aa).

Residues 12-13 (RI) and R81 contribute to the NAD(+) site. Substrate contacts are provided by residues 154–156 (SCT), R200, 213–214 (TK), and R236. C155 serves as the catalytic Nucleophile. N318 serves as a coordination point for NAD(+).

It belongs to the glyceraldehyde-3-phosphate dehydrogenase family. Epd subfamily. In terms of assembly, homotetramer.

It is found in the cytoplasm. The enzyme catalyses D-erythrose 4-phosphate + NAD(+) + H2O = 4-phospho-D-erythronate + NADH + 2 H(+). It participates in cofactor biosynthesis; pyridoxine 5'-phosphate biosynthesis; pyridoxine 5'-phosphate from D-erythrose 4-phosphate: step 1/5. Catalyzes the NAD-dependent conversion of D-erythrose 4-phosphate to 4-phosphoerythronate. The polypeptide is D-erythrose-4-phosphate dehydrogenase (Escherichia coli (strain UTI89 / UPEC)).